A 121-amino-acid polypeptide reads, in one-letter code: Basic phospholipase A2 F17 (121 aa).

7 disulfide bridges follow: cysteine 25–cysteine 114, cysteine 27–cysteine 43, cysteine 42–cysteine 94, cysteine 48–cysteine 121, cysteine 49–cysteine 87, cysteine 56–cysteine 80, and cysteine 74–cysteine 85. Ca(2+) is bound by residues tyrosine 26, glycine 28, and glycine 30. Histidine 46 is an active-site residue. A Ca(2+)-binding site is contributed by aspartate 47. The active site involves aspartate 88.

This sequence belongs to the phospholipase A2 family. Group II subfamily. D49 sub-subfamily. As to quaternary structure, when this protein is associated with crotapotin (F5 or F7), it forms the crotoxin protein. Requires Ca(2+) as cofactor. Expressed by the venom gland.

It is found in the secreted. It carries out the reaction a 1,2-diacyl-sn-glycero-3-phosphocholine + H2O = a 1-acyl-sn-glycero-3-phosphocholine + a fatty acid + H(+). With respect to regulation, activated by heparin. Inhibited by its chaperone crotapotin. Its function is as follows. Snake venom phospholipase A2 (PLA2) that has anticoagulant activity and inhibits bactericial growth of the Gram-negative bacteria Xanthomonas axonopodis pv. passiflorae (in monomeric form). PLA2 catalyzes the calcium-dependent hydrolysis of the 2-acyl groups in 3-sn-phosphoglycerides. The polypeptide is Basic phospholipase A2 F17 (Crotalus durissus terrificus (South American rattlesnake)).